Consider the following 112-residue polypeptide: DNA-binding protein TK1278 (112 aa).

It belongs to the PDCD5 family.

The protein is DNA-binding protein TK1278 of Thermococcus kodakarensis (strain ATCC BAA-918 / JCM 12380 / KOD1) (Pyrococcus kodakaraensis (strain KOD1)).